A 121-amino-acid polypeptide reads, in one-letter code: Ribosome-binding factor A (121 aa).

The protein belongs to the RbfA family. In terms of assembly, monomer. Binds 30S ribosomal subunits, but not 50S ribosomal subunits or 70S ribosomes.

The protein resides in the cytoplasm. In terms of biological role, one of several proteins that assist in the late maturation steps of the functional core of the 30S ribosomal subunit. Associates with free 30S ribosomal subunits (but not with 30S subunits that are part of 70S ribosomes or polysomes). Required for efficient processing of 16S rRNA. May interact with the 5'-terminal helix region of 16S rRNA. The protein is Ribosome-binding factor A of Paraburkholderia phytofirmans (strain DSM 17436 / LMG 22146 / PsJN) (Burkholderia phytofirmans).